Consider the following 289-residue polypeptide: T-cell ecto-ADP-ribosyltransferase 2 (289 aa).

An N-terminal signal peptide occupies residues 1-20; it reads MTSKIFKFFLTWWLTQQVTG. 2 disulfide bridges follow: C41–C246 and C141–C193. Positions 61–241 constitute a TR mART core domain; it reads EELKLEWEKA…IFLDSPERKK (181 aa). N79 carries N-linked (GlcNAc...) asparagine glycosylation. NAD(+) contacts are provided by Y98, R146, and Q164. Residue R146 is part of the active site. The active site involves S167. Residue S202 coordinates NAD(+). E209 is a catalytic residue. Residue N249 is glycosylated (N-linked (GlcNAc...) asparagine). The GPI-anchor amidated serine moiety is linked to residue S260. Residues 261-289 constitute a propeptide, removed in mature form; it reads ISGSRESCVSLFLVVLLGLLVQQLTLAEL.

Belongs to the Arg-specific ADP-ribosyltransferase family. As to expression, expressed in spleen, intestine and thymus.

The protein localises to the cell membrane. It carries out the reaction L-arginyl-[protein] + NAD(+) = N(omega)-(ADP-D-ribosyl)-L-arginyl-[protein] + nicotinamide + H(+). The catalysed reaction is NAD(+) + H2O = ADP-D-ribose + nicotinamide + H(+). Its function is as follows. Has both NAD(+) glycohydrolase and ADP-ribosyltransferase activity. The protein is T-cell ecto-ADP-ribosyltransferase 2 (Art2b) of Mus musculus (Mouse).